Reading from the N-terminus, the 289-residue chain is Rhodopsin (289 aa).

Residues 1-7 are Extracellular-facing; sequence YLVNPAG. The chain crosses the membrane as a helical span at residues 8–32; it reads YAALGAYMFLLILIGFPVNFLTLYV. The Cytoplasmic segment spans residues 33 to 44; sequence TLEHKKLRTPLN. A helical membrane pass occupies residues 45-67; sequence YILLNLAVADLFMVLGGFTTTMY. Residues 68 to 81 lie on the Extracellular side of the membrane; sequence TSMHGYFVLGRLGC. Residues Cys81 and Cys158 are joined by a disulfide bond. The helical transmembrane segment at 82–104 threads the bilayer; the sequence is NLEGFFATLGGEIALWSLVVLAI. A 'Ionic lock' involved in activated form stabilization motif is present at residues 105–107; that stretch reads ERW. Residues 105-123 lie on the Cytoplasmic side of the membrane; the sequence is ERWIVGLKPIRNFRFTEDH. The helical transmembrane segment at 124-144 threads the bilayer; it reads AIMGLAFSWVMALSCAVPPLA. Residues 145–173 are Extracellular-facing; that stretch reads GWLRYIPEGIQGSCGVDYYTRAEGFNNES. The N-linked (GlcNAc...) asparagine glycan is linked to Asn171. Residues 174–195 traverse the membrane as a helical segment; it reads FVIYMFTVHFLIPLSVIFFCYG. Over 196-223 the chain is Cytoplasmic; sequence RLLCAVKEAAAAQQESETTQRAEKEVSR. The chain crosses the membrane as a helical span at residues 224-245; that stretch reads MVVIMVIGFLVCWLPYASVAWW. Topologically, residues 246 to 257 are extracellular; that stretch reads IFCNQGSDFGPI. Residues 258–279 traverse the membrane as a helical segment; that stretch reads FMTLPSFFAKRPAIYNPMIYIC. Lys267 is modified (N6-(retinylidene)lysine). Residues 280-289 lie on the Cytoplasmic side of the membrane; that stretch reads MNKQFRHCMI.

Belongs to the G-protein coupled receptor 1 family. Opsin subfamily. In terms of processing, phosphorylated on some or all of the serine and threonine residues present in the C-terminal region. Contains one covalently linked retinal chromophore.

The protein resides in the membrane. The protein localises to the cell projection. It is found in the cilium. It localises to the photoreceptor outer segment. In terms of biological role, photoreceptor required for image-forming vision at low light intensity. While most salt water fish species use retinal as chromophore, most freshwater fish use 3-dehydroretinal, or a mixture of retinal and 3-dehydroretinal. Light-induced isomerization of 11-cis to all-trans retinal triggers a conformational change that activates signaling via G-proteins. Subsequent receptor phosphorylation mediates displacement of the bound G-protein alpha subunit by arrestin and terminates signaling. The sequence is that of Rhodopsin (rho) from Limnocottus pallidus (Ray-finned fish).